A 342-amino-acid polypeptide reads, in one-letter code: Growth hormone-regulated TBC protein 1 (342 aa).

Residues G72–G263 form the Rab-GAP TBC domain.

Functionally, may act as a GTPase-activating protein for Rab family protein(s). The protein is Growth hormone-regulated TBC protein 1 (grtp1) of Xenopus tropicalis (Western clawed frog).